Reading from the N-terminus, the 674-residue chain is Sterile alpha motif domain-containing protein 15 (674 aa).

Positions 1 to 18 (MAEVPEDYDSGPDEDGEL) are enriched in acidic residues. Positions 1 to 448 (MAEVPEDYDS…LEHREPKRGK (448 aa)) are disordered. 3 stretches are compositionally biased toward basic and acidic residues: residues 87-142 (IAKE…EEAK), 195-223 (ESLR…KLGE), and 236-274 (TKPE…KSSE). Residues 276–290 (AGLEPPEETQPEVPE) show a composition bias toward acidic residues. Basic and acidic residues-rich tracts occupy residues 291–322 (EMQR…KSTD), 330–346 (EEIK…KTNE), 354–372 (EMMK…EKKN), and 391–429 (VEEK…EPIK). The SAM domain maps to 545–608 (WDPEEVAEWI…SRHTQELLEI (64 aa)).

The chain is Sterile alpha motif domain-containing protein 15 (SAMD15) from Homo sapiens (Human).